Reading from the N-terminus, the 273-residue chain is Large ribosomal subunit protein uL2cz/uL2cy (273 aa).

Disordered regions lie at residues 1–27 (MAKHLYKTPIPSTRKGTVDRQVKSNPR) and 225–273 (PVDH…RRRK).

It belongs to the universal ribosomal protein uL2 family. In terms of assembly, part of the 50S ribosomal subunit.

The protein resides in the plastid. It is found in the chloroplast. This is Large ribosomal subunit protein uL2cz/uL2cy (rpl2-A) from Lolium perenne (Perennial ryegrass).